The following is a 356-amino-acid chain: Histidinol-phosphate aminotransferase (356 aa).

Position 214 is an N6-(pyridoxal phosphate)lysine (Lys-214).

The protein belongs to the class-II pyridoxal-phosphate-dependent aminotransferase family. Histidinol-phosphate aminotransferase subfamily. As to quaternary structure, homodimer. The cofactor is pyridoxal 5'-phosphate.

It carries out the reaction L-histidinol phosphate + 2-oxoglutarate = 3-(imidazol-4-yl)-2-oxopropyl phosphate + L-glutamate. Its pathway is amino-acid biosynthesis; L-histidine biosynthesis; L-histidine from 5-phospho-alpha-D-ribose 1-diphosphate: step 7/9. This Escherichia coli O1:K1 / APEC protein is Histidinol-phosphate aminotransferase.